Reading from the N-terminus, the 73-residue chain is UPF0346 protein SAS1364 (73 aa).

Belongs to the UPF0346 family.

The chain is UPF0346 protein SAS1364 from Staphylococcus aureus (strain MSSA476).